The sequence spans 98 residues: MADVTGIALGMIETRGLVPAIEAADAMTKAAEVRLVGRQFVGGGYVTVLVRGETGAVNAAVRAGADACERVGDGLVAAHIIARVHSEVENILPKAPQA.

The BMC domain maps to 8–93 (ALGMIETRGL…VHSEVENILP (86 aa)).

The protein belongs to the bacterial microcompartments protein family. CsoS1 subfamily. In terms of assembly, homohexamer with a small central pore; the concave side is mostly positive electrostatic potential, whereas the convex side is mostly negative electrostatic potential. Forms a CsoS2-CsoS1-RuBisCO complex. Interacts with the N-terminus (residues 1-136) of RuBisCO (CbbL).

It localises to the carboxysome. The major shell protein of the carboxysome, a polyhedral inclusion where RuBisCO (ribulose bisphosphate carboxylase, ccbL-ccbS) is sequestered. Assembles into hexamers which make sheets that form the facets of the polyhedral carboxysome. The shell probably limits the diffusion of CO(2) into and out of the carboxysome. Molecular modeling shows the central pore of this protein is selectively permeable to anions such as HCO(3) rather than CO(2) or O(2). There are estimated to be 2970 CsoS1A/CsoS1C proteins per carboxysome (the proteins differ by only 1 residue). Functionally, unlike beta-carboxysomes, alpha-carboxysomes (Cb) can form without cargo protein. CsoS2 is essential for Cb formation and is also capable of targeting foreign proteins to the Cb. The Cb shell assembles with the aid of CsoS2; CsoS1A, CsoS1B and CsoS1C form the majority of the shell while CsoS4A and CsoS4B form vertices. CsoS1D forms pseudohexamers that probably control metabolite flux into and out of the shell. The chain is Major carboxysome shell protein CsoS1A from Halothiobacillus neapolitanus (strain ATCC 23641 / c2) (Thiobacillus neapolitanus).